The following is a 292-amino-acid chain: Xyloglucan endotransglucosylase/hydrolase protein A (292 aa).

A signal peptide spans 1 to 20 (MGSSLWTCLILLSLASASFA). Residues 21–219 (ANPRTPIDVP…WSKAPFIASY (199 aa)) enclose the GH16 domain. The active-site Nucleophile is Glu-105. Residue Glu-109 is the Proton donor of the active site. Residue Glu-109 coordinates xyloglucan. Asn-113 carries an N-linked (GlcNAc...) asparagine glycan. Xyloglucan contacts are provided by residues 122-124 (QTN), 132-134 (DRE), 198-199 (DW), and Gly-203. Cystine bridges form between Cys-227–Cys-236 and Cys-273–Cys-286. Arg-278 is a binding site for xyloglucan.

It belongs to the glycosyl hydrolase 16 family. XTH group 1 subfamily. Post-translationally, contains at least one intrachain disulfide bond essential for its enzymatic activity. Predominantly expressed in the phloem fibers of growing internodes. Expressed in xylem cells in the basal part of the internode. In the internode, it is expressed closer to the top of the internode compared to XTHB.

The protein resides in the secreted. It is found in the cell wall. The protein localises to the extracellular space. Its subcellular location is the apoplast. The catalysed reaction is breaks a beta-(1-&gt;4) bond in the backbone of a xyloglucan and transfers the xyloglucanyl segment on to O-4 of the non-reducing terminal glucose residue of an acceptor, which can be a xyloglucan or an oligosaccharide of xyloglucan.. Catalyzes xyloglucan endohydrolysis (XEH) and/or endotransglycosylation (XET). Cleaves and religates xyloglucan polymers, an essential constituent of the primary cell wall, and thereby participates in cell wall construction of growing tissues. The protein is Xyloglucan endotransglucosylase/hydrolase protein A (XTHA) of Phaseolus angularis (Azuki bean).